A 190-amino-acid polypeptide reads, in one-letter code: Dynactin subunit 6 (190 aa).

The residue at position 186 (T186) is a Phosphothreonine; by CDK1.

The protein belongs to the dynactin subunits 5/6 family. Dynactin subunit 6 subfamily. In terms of assembly, subunit of dynactin, a multiprotein complex part of a tripartite complex with dynein and a adapter, such as BICDL1, BICD2 or HOOK3. The dynactin complex is built around ACTR1A/ACTB filament and consists of an actin-related filament composed of a shoulder domain, a pointed end and a barbed end. Its length is defined by its flexible shoulder domain. The soulder is composed of 2 DCTN1 subunits, 4 DCTN2 and 2 DCTN3. The 4 DCNT2 (via N-terminus) bind the ACTR1A filament and act as molecular rulers to determine the length. The pointed end is important for binding dynein-dynactin cargo adapters. Consists of 4 subunits: ACTR10, DCNT4, DCTN5 and DCTN6. Within the complex DCTN6 forms a heterodimer with DCTN5. The barbed end is composed of a CAPZA1:CAPZB heterodimers, which binds ACTR1A/ACTB filament and dynactin and stabilizes dynactin. Interacts with PLK1. Interacts with N4BP2L1. Post-translationally, phosphorylation at Thr-186 by CDK1 during mitotic prometaphase creates a binding site for PLK1 that facilitates its recruitment to kinetochores.

The protein resides in the cytoplasm. Its subcellular location is the cytoskeleton. It localises to the chromosome. It is found in the centromere. The protein localises to the kinetochore. Part of the dynactin complex that activates the molecular motor dynein for ultra-processive transport along microtubules. This chain is Dynactin subunit 6 (DCTN6), found in Bos taurus (Bovine).